Reading from the N-terminus, the 179-residue chain is Large ribosomal subunit protein uL6 (179 aa).

Belongs to the universal ribosomal protein uL6 family. Part of the 50S ribosomal subunit.

This protein binds to the 23S rRNA, and is important in its secondary structure. It is located near the subunit interface in the base of the L7/L12 stalk, and near the tRNA binding site of the peptidyltransferase center. The polypeptide is Large ribosomal subunit protein uL6 (Pseudomonas savastanoi pv. phaseolicola (strain 1448A / Race 6) (Pseudomonas syringae pv. phaseolicola (strain 1448A / Race 6))).